A 121-amino-acid chain; its full sequence is uncharacterized protein (121 aa).

A CHCH domain is found at 43–86; that stretch reads LKECSSHVAAFADCSKDKYISVVWECRELQQLMKNCLVEYTTSE. 2 consecutive short sequence motifs (cx9C motif) follow at residues 46-56 and 68-78; these read CSSHVAAFADC and CRELQQLMKNC. Cystine bridges form between Cys-46-Cys-78 and Cys-56-Cys-68.

Belongs to the CMC family.

This is an uncharacterized protein from Dictyostelium discoideum (Social amoeba).